The chain runs to 360 residues: Phospho-N-acetylmuramoyl-pentapeptide-transferase (360 aa).

The next 10 membrane-spanning stretches (helical) occupy residues 27 to 47 (GAMITSALIVFLFGPTIINSL), 71 to 91 (TPTMGGLMIMTGILASCLLWA), 93 to 113 (LASVYVWVVLMVSVGFGAIGF), 128 to 148 (FSGKARLGIEFLIAAIAAFTI), 168 to 188 (LVINLSWFFIPFAAFVMVGAG), 199 to 219 (GLAIVPVMVAAASFGFIAYLS), 239 to 259 (LAVVLGAVIGAGLGFLWFNAP), 262 to 282 (AIFMGDTGSLALGGMLGTVAV), 288 to 308 (IVLAIIGGLFVMEALSVIIQV), and 337 to 357 (QVVIRFWIVAIILAMIGLSTL).

The protein belongs to the glycosyltransferase 4 family. MraY subfamily. Mg(2+) is required as a cofactor.

Its subcellular location is the cell inner membrane. The catalysed reaction is UDP-N-acetyl-alpha-D-muramoyl-L-alanyl-gamma-D-glutamyl-meso-2,6-diaminopimeloyl-D-alanyl-D-alanine + di-trans,octa-cis-undecaprenyl phosphate = di-trans,octa-cis-undecaprenyl diphospho-N-acetyl-alpha-D-muramoyl-L-alanyl-D-glutamyl-meso-2,6-diaminopimeloyl-D-alanyl-D-alanine + UMP. It participates in cell wall biogenesis; peptidoglycan biosynthesis. Its function is as follows. Catalyzes the initial step of the lipid cycle reactions in the biosynthesis of the cell wall peptidoglycan: transfers peptidoglycan precursor phospho-MurNAc-pentapeptide from UDP-MurNAc-pentapeptide onto the lipid carrier undecaprenyl phosphate, yielding undecaprenyl-pyrophosphoryl-MurNAc-pentapeptide, known as lipid I. The chain is Phospho-N-acetylmuramoyl-pentapeptide-transferase from Brucella abortus (strain S19).